Here is a 586-residue protein sequence, read N- to C-terminus: Acyl-coenzyme A synthetase ACSM3, mitochondrial (586 aa).

A mitochondrion-targeting transit peptide spans 1–27 (MLARVTRKMLRHAKCFQRLAIFGSVRA). An N6-succinyllysine mark is found at lysine 73 and lysine 106. Position 157 is an N6-acetyllysine (lysine 157). Residues 235-243 (TSGTSGYPK), 374-379 (EGYGQT), aspartate 461, arginine 476, and lysine 572 contribute to the ATP site.

The protein belongs to the ATP-dependent AMP-binding enzyme family. The cofactor is Mg(2+). Mn(2+) is required as a cofactor.

It localises to the mitochondrion. Its subcellular location is the mitochondrion matrix. The catalysed reaction is a medium-chain fatty acid + ATP + CoA = a medium-chain fatty acyl-CoA + AMP + diphosphate. It catalyses the reaction propanoate + ATP + CoA = propanoyl-CoA + AMP + diphosphate. It carries out the reaction butanoate + ATP + CoA = butanoyl-CoA + AMP + diphosphate. The enzyme catalyses 2-methylpropanoate + ATP + CoA = 2-methylpropanoyl-CoA + AMP + diphosphate. The catalysed reaction is 2-methylbutanoate + ATP + CoA = 2-methylbutanoyl-CoA + AMP + diphosphate. It catalyses the reaction octanoate + ATP + CoA = octanoyl-CoA + AMP + diphosphate. Its function is as follows. Catalyzes the activation of fatty acids by CoA to produce an acyl-CoA, the first step in fatty acid metabolism. Capable of activating medium-chain fatty acids with a preference for isobutyrate among fatty acids with 2-6 carbon atoms. The sequence is that of Acyl-coenzyme A synthetase ACSM3, mitochondrial (ACSM3) from Homo sapiens (Human).